A 670-amino-acid polypeptide reads, in one-letter code: ATP synthase subunit alpha 2 (670 aa).

180–187 (GDRATGKT) is an ATP binding site. The tract at residues 525 to 670 (MPAEDAAGDI…DAEAEARHKR (146 aa)) is disordered. Residues 543–588 (ARGDADRDADHGANREVSREVSPEASREVSREVSREVSHEADRDAA) show a composition bias toward basic and acidic residues. The segment covering 589-599 (ADAARVAGRAP) has biased composition (low complexity). Positions 621-639 (ADGDRASASRPPPDARGDA) are enriched in basic and acidic residues. Positions 650–661 (ADANVNADANVD) are enriched in low complexity.

The protein belongs to the ATPase alpha/beta chains family. As to quaternary structure, F-type ATPases have 2 components, CF(1) - the catalytic core - and CF(0) - the membrane proton channel. CF(1) has five subunits: alpha(3), beta(3), gamma(1), delta(1), epsilon(1). CF(0) has three main subunits: a(1), b(2) and c(9-12). The alpha and beta chains form an alternating ring which encloses part of the gamma chain. CF(1) is attached to CF(0) by a central stalk formed by the gamma and epsilon chains, while a peripheral stalk is formed by the delta and b chains.

Its subcellular location is the cell inner membrane. It catalyses the reaction ATP + H2O + 4 H(+)(in) = ADP + phosphate + 5 H(+)(out). Functionally, produces ATP from ADP in the presence of a proton gradient across the membrane. The alpha chain is a regulatory subunit. This is ATP synthase subunit alpha 2 from Burkholderia mallei (strain NCTC 10247).